Reading from the N-terminus, the 178-residue chain is Glutamyl-tRNA(Gln) amidotransferase subunit C, mitochondrial (178 aa).

The transit peptide at 1 to 31 (MFRHIFTLGPRSISAITVRSRRALSSTAKPV) directs the protein to the mitochondrion. The segment at 26 to 67 (STAKPVSAPVTSDDRPNLDVKHLKHPTKVPQQPHKSDIDRRQ) is disordered. Residues 37–46 (SDDRPNLDVK) show a composition bias toward basic and acidic residues.

This sequence belongs to the GatC family. Subunit of the heterotrimeric GatCAB amidotransferase (AdT) complex, composed of A, B and C subunits.

It localises to the mitochondrion. The enzyme catalyses L-glutamyl-tRNA(Gln) + L-glutamine + ATP + H2O = L-glutaminyl-tRNA(Gln) + L-glutamate + ADP + phosphate + H(+). Allows the formation of correctly charged Gln-tRNA(Gln) through the transamidation of misacylated Glu-tRNA(Gln) in the mitochondria. The reaction takes place in the presence of glutamine and ATP through an activated gamma-phospho-Glu-tRNA(Gln). This is Glutamyl-tRNA(Gln) amidotransferase subunit C, mitochondrial from Aedes aegypti (Yellowfever mosquito).